The following is a 256-amino-acid chain: GCN5-related N-acetyltransferase 10, chloroplastic (256 aa).

Residues 1–41 constitute a chloroplast transit peptide; it reads MGHLPQSLYSAAGPKFPYPGSSGLGVDQRKLTWSRFPVFLR. The N-acetyltransferase domain maps to 106 to 256; it reads FMFFQAEVLS…RRVLMSKRFS (151 aa). Residues 178 to 180, 186 to 191, 217 to 219, and Tyr224 contribute to the acetyl-CoA site; these read LAV, RKKMAS, and DAA. The Proton donor role is filled by Tyr224.

It belongs to the acetyltransferase family. GNAT subfamily. In terms of assembly, oligomer. In terms of processing, autoacetylated. As to expression, expressed in green tissues.

The protein resides in the plastid. Its subcellular location is the chloroplast. The catalysed reaction is an N-terminal L-alpha-aminoacyl-[protein] + acetyl-CoA = N-terminal N(alpha)-acetyl-L-alpha-aminoacyl-[protein] + CoA + H(+). It catalyses the reaction L-lysyl-[protein] + acetyl-CoA = N(6)-acetyl-L-lysyl-[protein] + CoA + H(+). It carries out the reaction N-terminal L-methionyl-[protein] + acetyl-CoA = N-terminal N(alpha)-acetyl-L-methionyl-[protein] + CoA + H(+). The enzyme catalyses N-terminal L-seryl-[protein] + acetyl-CoA = N-terminal N(alpha)-acetyl-L-seryl-[protein] + CoA + H(+). The catalysed reaction is N-terminal L-valyl-[protein] + acetyl-CoA = N-terminal N(alpha)-acetyl-L-valyl-[protein] + CoA + H(+). It catalyses the reaction N-terminal L-threonyl-[protein] + acetyl-CoA = N-terminal N(alpha)-acetyl-L-threonyl-[protein] + CoA + H(+). It carries out the reaction N-terminal L-alanyl-[protein] + acetyl-CoA = N-terminal N(alpha)-acetyl-L-alanyl-[protein] + CoA + H(+). The enzyme catalyses N-terminal glycyl-[protein] + acetyl-CoA = N-terminal N(alpha)-acetylglycyl-[protein] + CoA + H(+). In terms of biological role, protein acetyltransferase with dual specificity triggering both N-alpha-acetylation (NTA), with a preference for leucine, methionine, serine, valine and to a lower extent threonine and alanine as substrates (can also use glycine), and epsilon-lysine acetylation (KA) of several plastid proteins. This chain is GCN5-related N-acetyltransferase 10, chloroplastic, found in Arabidopsis thaliana (Mouse-ear cress).